A 442-amino-acid polypeptide reads, in one-letter code: D-aminoacyl-tRNA deacylase (442 aa).

The protein belongs to the DtdA deacylase family. Monomer. The cofactor is Zn(2+).

The catalysed reaction is a D-aminoacyl-tRNA + H2O = a tRNA + a D-alpha-amino acid + H(+). The enzyme catalyses glycyl-tRNA(Ala) + H2O = tRNA(Ala) + glycine + H(+). Its function is as follows. D-aminoacyl-tRNA deacylase with broad substrate specificity. By recycling D-aminoacyl-tRNA to D-amino acids and free tRNA molecules, this enzyme counteracts the toxicity associated with the formation of D-aminoacyl-tRNA entities in vivo. The protein is D-aminoacyl-tRNA deacylase of Methanospirillum hungatei JF-1 (strain ATCC 27890 / DSM 864 / NBRC 100397 / JF-1).